Reading from the N-terminus, the 373-residue chain is GTP cyclohydrolase 1 type 2 homolog (373 aa).

Residues histidine 68, histidine 69, aspartate 107, histidine 333, and glutamate 336 each contribute to the a divalent metal cation site.

It belongs to the GTP cyclohydrolase I type 2/NIF3 family. In terms of assembly, homohexamer.

The protein is GTP cyclohydrolase 1 type 2 homolog (yqfO) of Bacillus subtilis (strain 168).